Here is a 197-residue protein sequence, read N- to C-terminus: MTQLYLASASPRRRELLTQLDIPFSVLNVAVKEQRLPEEAAEVYVRRLAHEKATAGVAAAPSDLPVLGADTIVVLNGQVLEKPQDETHAAEMLGQLSGKQHQVMTAVALADKDDILSCLVITDVVFRPLSQQDIERYIASGEPMDKAGAYGIQGKGGCFVRSLNGSYYAVVGLPLVETDELFSNFAALRSARGKHDC.

Asp-70 functions as the Proton acceptor in the catalytic mechanism.

It belongs to the Maf family. YhdE subfamily. A divalent metal cation serves as cofactor.

Its subcellular location is the cytoplasm. The catalysed reaction is dTTP + H2O = dTMP + diphosphate + H(+). The enzyme catalyses UTP + H2O = UMP + diphosphate + H(+). In terms of biological role, nucleoside triphosphate pyrophosphatase that hydrolyzes dTTP and UTP. May have a dual role in cell division arrest and in preventing the incorporation of modified nucleotides into cellular nucleic acids. This is dTTP/UTP pyrophosphatase from Pectobacterium atrosepticum (strain SCRI 1043 / ATCC BAA-672) (Erwinia carotovora subsp. atroseptica).